The primary structure comprises 404 residues: Cytochrome b561 and DOMON domain-containing protein At2g04850 (404 aa).

Residues 1-22 (MATLILSFLLLLLATKLPESLA) form the signal peptide. Residues 43-173 (QQASIAWTYH…TKIHHVWNRG (131 aa)) enclose the DOMON domain. Positions 180–380 (SPTIHPTTST…MEVNSWVVFC (201 aa)) constitute a Cytochrome b561 domain. A helical membrane pass occupies residues 217-237 (VTHGVVNAISWGFLLPAGAVT). Heme b-binding residues include His219 and His255. The helical transmembrane segment at 256–276 (AAIQLTGFLLGTIGFSIGIVL) threads the bilayer. Residue His288 coordinates heme b. A helical transmembrane segment spans residues 290–310 (SLGIATFTAAALQTLALLFRP). Residue His324 coordinates heme b. Helical transmembrane passes span 326 to 346 (FVGY…FEVL) and 359 to 379 (LCLS…WVVF).

The cofactor is heme b.

The protein localises to the membrane. May act as a catecholamine-responsive trans-membrane electron transporter. In Arabidopsis thaliana (Mouse-ear cress), this protein is Cytochrome b561 and DOMON domain-containing protein At2g04850.